Reading from the N-terminus, the 184-residue chain is Large ribosomal subunit protein bL9 (184 aa).

A disordered region spans residues 160–184; that stretch reads LQNQKSEQQEAEQDANKEATDGDDS. Over residues 173-184 the composition is skewed to basic and acidic residues; the sequence is DANKEATDGDDS.

Belongs to the bacterial ribosomal protein bL9 family.

In terms of biological role, binds to the 23S rRNA. The protein is Large ribosomal subunit protein bL9 of Wolbachia pipientis wMel.